A 178-amino-acid polypeptide reads, in one-letter code: Cytidylate kinase (178 aa).

7–15 (GLPGTGTTT) contacts ATP.

This sequence belongs to the cytidylate kinase family. Type 2 subfamily.

It is found in the cytoplasm. It catalyses the reaction CMP + ATP = CDP + ADP. It carries out the reaction dCMP + ATP = dCDP + ADP. This Methanocaldococcus jannaschii (strain ATCC 43067 / DSM 2661 / JAL-1 / JCM 10045 / NBRC 100440) (Methanococcus jannaschii) protein is Cytidylate kinase (cmk).